Reading from the N-terminus, the 574-residue chain is Urease subunit alpha (574 aa).

In terms of domain architecture, Urease spans 131 to 574 (GAIDSHIHFI…LPMAQRYLLI (444 aa)). Residues H136, H138, and K219 each contribute to the Ni(2+) site. An N6-carboxylysine modification is found at K219. Residue H221 participates in substrate binding. Residues H248 and H274 each contribute to the Ni(2+) site. Residue H322 is the Proton donor of the active site. Position 362 (D362) interacts with Ni(2+).

Belongs to the metallo-dependent hydrolases superfamily. Urease alpha subunit family. As to quaternary structure, heterotrimer of UreA (gamma), UreB (beta) and UreC (alpha) subunits. Three heterotrimers associate to form the active enzyme. The cofactor is Ni cation. Post-translationally, carboxylation allows a single lysine to coordinate two nickel ions.

The protein resides in the cytoplasm. It catalyses the reaction urea + 2 H2O + H(+) = hydrogencarbonate + 2 NH4(+). It functions in the pathway nitrogen metabolism; urea degradation; CO(2) and NH(3) from urea (urease route): step 1/1. The sequence is that of Urease subunit alpha from Prochlorococcus marinus (strain MIT 9303).